A 243-amino-acid polypeptide reads, in one-letter code: Phosphoadenosine 5'-phosphosulfate reductase (243 aa).

C239 functions as the Nucleophile; cysteine thiosulfonate intermediate in the catalytic mechanism.

The protein belongs to the PAPS reductase family. CysH subfamily.

It localises to the cytoplasm. It catalyses the reaction [thioredoxin]-disulfide + sulfite + adenosine 3',5'-bisphosphate + 2 H(+) = [thioredoxin]-dithiol + 3'-phosphoadenylyl sulfate. The protein operates within sulfur metabolism; hydrogen sulfide biosynthesis; sulfite from sulfate: step 3/3. Catalyzes the formation of sulfite from phosphoadenosine 5'-phosphosulfate (PAPS) using thioredoxin as an electron donor. The chain is Phosphoadenosine 5'-phosphosulfate reductase from Erwinia tasmaniensis (strain DSM 17950 / CFBP 7177 / CIP 109463 / NCPPB 4357 / Et1/99).